The chain runs to 338 residues: GTPase Obg (338 aa).

One can recognise an Obg domain in the interval 1–159 (MQFIDEVKIH…RWLRLELKLL (159 aa)). Residues 160–331 (ADVGLLGFPN…LLDEIARSLW (172 aa)) form the OBG-type G domain. Residues 166–173 (GFPNVGKS), 191–195 (FTTLK), 213–216 (DIPG), 283–286 (NKMD), and 312–314 (SAA) each bind GTP. Mg(2+)-binding residues include S173 and T193.

Belongs to the TRAFAC class OBG-HflX-like GTPase superfamily. OBG GTPase family. Monomer. Mg(2+) serves as cofactor.

It is found in the cytoplasm. An essential GTPase which binds GTP, GDP and possibly (p)ppGpp with moderate affinity, with high nucleotide exchange rates and a fairly low GTP hydrolysis rate. Plays a role in control of the cell cycle, stress response, ribosome biogenesis and in those bacteria that undergo differentiation, in morphogenesis control. This is GTPase Obg from Geobacter sulfurreducens (strain ATCC 51573 / DSM 12127 / PCA).